We begin with the raw amino-acid sequence, 82 residues long: Large ribosomal subunit protein bL31 (82 aa).

The Zn(2+) site is built by Cys-16, Cys-18, Cys-37, and Cys-40.

Belongs to the bacterial ribosomal protein bL31 family. Type A subfamily. Part of the 50S ribosomal subunit. Zn(2+) serves as cofactor.

In terms of biological role, binds the 23S rRNA. In Blochmanniella pennsylvanica (strain BPEN), this protein is Large ribosomal subunit protein bL31.